A 348-amino-acid polypeptide reads, in one-letter code: Uroporphyrinogen decarboxylase (348 aa).

Residues 27–31 (RQAGR), phenylalanine 46, aspartate 76, tyrosine 152, serine 207, and histidine 320 contribute to the substrate site.

The protein belongs to the uroporphyrinogen decarboxylase family. Homodimer.

The protein localises to the cytoplasm. It catalyses the reaction uroporphyrinogen III + 4 H(+) = coproporphyrinogen III + 4 CO2. The protein operates within porphyrin-containing compound metabolism; protoporphyrin-IX biosynthesis; coproporphyrinogen-III from 5-aminolevulinate: step 4/4. In terms of biological role, catalyzes the decarboxylation of four acetate groups of uroporphyrinogen-III to yield coproporphyrinogen-III. In Bacillus cytotoxicus (strain DSM 22905 / CIP 110041 / 391-98 / NVH 391-98), this protein is Uroporphyrinogen decarboxylase.